The following is a 207-amino-acid chain: Large ribosomal subunit protein bL25 (207 aa).

The segment at 182–207 is disordered; the sequence is QDLGDESVQEEQAAESAEGESEGSED.

Belongs to the bacterial ribosomal protein bL25 family. CTC subfamily. Part of the 50S ribosomal subunit; part of the 5S rRNA/L5/L18/L25 subcomplex. Contacts the 5S rRNA. Binds to the 5S rRNA independently of L5 and L18.

Its function is as follows. This is one of the proteins that binds to the 5S RNA in the ribosome where it forms part of the central protuberance. This chain is Large ribosomal subunit protein bL25, found in Micrococcus luteus (strain ATCC 4698 / DSM 20030 / JCM 1464 / CCM 169 / CCUG 5858 / IAM 1056 / NBRC 3333 / NCIMB 9278 / NCTC 2665 / VKM Ac-2230) (Micrococcus lysodeikticus).